The following is an 81-amino-acid chain: RNA-binding protein Hfq (81 aa).

The Sm domain occupies 10–69 (DPFLNTLRKEHVPVSIYLVNGIKLQGQVDSFDQYVILLKNTVTQMVYKHAISTIVPGRAV).

Belongs to the Hfq family. Homohexamer.

RNA chaperone that binds small regulatory RNA (sRNAs) and mRNAs to facilitate mRNA translational regulation in response to envelope stress, environmental stress and changes in metabolite concentrations. Also binds with high specificity to tRNAs. The protein is RNA-binding protein Hfq of Methylobacillus flagellatus (strain ATCC 51484 / DSM 6875 / VKM B-1610 / KT).